The following is a 176-amino-acid chain: Prenylated Rab acceptor 1 (176 aa).

Met1 is subject to N-acetylmethionine. Positions 11 to 13 match the SKL peroxisome targeting motif motif; sequence SRF. Ser18 carries the post-translational modification Phosphoserine. The next 2 helical transmembrane spans lie at 84–104 and 129–149; these read LLTNLLLLFVIVLVVAGIVGI and VCVAVPIGFLASPISTLLWLI.

It belongs to the PRA1 family. As to quaternary structure, interacts with YIP1 and the Rab GTPases SEC4, YPT1, YPT6, YPT10, YPT11, YPT31, YPT32 and YPT52.

The protein localises to the golgi apparatus membrane. It is found in the peroxisome membrane. This Saccharomyces cerevisiae (strain ATCC 204508 / S288c) (Baker's yeast) protein is Prenylated Rab acceptor 1 (YIP3).